Reading from the N-terminus, the 801-residue chain is Phosphatidylinositol 3-kinase pik3 (801 aa).

In terms of domain architecture, C2 PI3K-type spans 14–166; that stretch reads VTARFLVKFC…RLDGLLLKLQ (153 aa). The region spanning 257-439 is the PIK helical domain; sequence DKDLKPNSKI…SSVMFLFQKE (183 aa). The PI3K/PI4K catalytic domain occupies 515–785; the sequence is IPDACTVFKS…LINDSVSALF (271 aa). The G-loop stretch occupies residues 521-527; sequence VFKSTMQ. Residues 654–662 are catalytic loop; that stretch reads GVGDRHLDN. Residues 673-694 form an activation loop region; sequence HADFGYILGRDPKLFSPAMKLS.

This sequence belongs to the PI3/PI4-kinase family. In terms of assembly, component of the autophagy-specific vps34 PI3-kinase complex I composed of vps15, atg6, pik3/vps34, atg14 and atg38. Also a component of the VPS34 PI3-kinase complex II composed of atg6, pik3, vps15 and vps38.

The enzyme catalyses a 1,2-diacyl-sn-glycero-3-phospho-(1D-myo-inositol) + ATP = a 1,2-diacyl-sn-glycero-3-phospho-(1D-myo-inositol-3-phosphate) + ADP + H(+). In terms of biological role, phosphatidylinositol 3-kinase that functions as a part of the autophagy-specific VPS34 PI3-kinase complex I that plays a role in autophagosome assembly. This complex is essential to recruit the atg8-phosphatidylinositol conjugate and the atg12-atg5 conjugate to the pre-autophagosomal structure. Also functions as part of the VPS34 PI3-kinase complex II. This is Phosphatidylinositol 3-kinase pik3 (pik3) from Schizosaccharomyces pombe (strain 972 / ATCC 24843) (Fission yeast).